The following is a 153-amino-acid chain: Ribosome maturation factor RimP (153 aa).

The protein belongs to the RimP family.

It localises to the cytoplasm. Its function is as follows. Required for maturation of 30S ribosomal subunits. The polypeptide is Ribosome maturation factor RimP (Nostoc punctiforme (strain ATCC 29133 / PCC 73102)).